Consider the following 282-residue polypeptide: Pantothenate synthetase (282 aa).

Met29 to His36 contributes to the ATP binding site. Residue His36 is the Proton donor of the active site. Gln60 contributes to the (R)-pantoate binding site. Gln60 contacts beta-alanine. An ATP-binding site is contributed by Gly146–Asp149. Position 152 (Gln152) interacts with (R)-pantoate. Residues Ile175 and Lys183–Arg186 each bind ATP.

Belongs to the pantothenate synthetase family. As to quaternary structure, homodimer.

It is found in the cytoplasm. It carries out the reaction (R)-pantoate + beta-alanine + ATP = (R)-pantothenate + AMP + diphosphate + H(+). It participates in cofactor biosynthesis; (R)-pantothenate biosynthesis; (R)-pantothenate from (R)-pantoate and beta-alanine: step 1/1. Catalyzes the condensation of pantoate with beta-alanine in an ATP-dependent reaction via a pantoyl-adenylate intermediate. The sequence is that of Pantothenate synthetase from Clostridioides difficile (strain 630) (Peptoclostridium difficile).